Consider the following 403-residue polypeptide: 4,4'-dithiodibutanoate disulfide reductase (403 aa).

FMN is bound at residue Gln103. Residue Tyr173 is the Proton donor of the active site. 348 to 349 (AR) contributes to the FMN binding site.

The protein belongs to the NADH:flavin oxidoreductase/NADH oxidase family. The cofactor is FMN.

It catalyses the reaction 2 4-sulfanylbutanoate + NAD(+) = 4,4'-disulfanyldibutanoate + NADH + H(+). Inactivated by cobalt, nickel and zinc ions. Functionally, involved in the degradation of the organic disulfide 4,4'-dithiodibutyric acid (DTDB). Catalyzes the initial cleavage of DTDB into 2 molecules of 4-mercaptobutyric acid (4MB). Low activities are observed with other disulfide compounds, such as 3,3'-dithiodipropionic acid DTDP, 3,3'-thiodipropionic acid TDP and DTNB. This chain is 4,4'-dithiodibutanoate disulfide reductase, found in Rhodococcus erythropolis (Arthrobacter picolinophilus).